The following is an 841-amino-acid chain: Copper-transporting P-type ATPase (841 aa).

Helical transmembrane passes span 186–206, 218–238, 256–276, 285–305, 445–465, and 474–494; these read LWVS…PMLG, ATFI…LPFF, IGLG…APGI, GAAV…VFVG, AVFV…WAAI, and GLLA…GLAT. The 4-aspartylphosphate intermediate role is filled by aspartate 530. Helical transmembrane passes span 602–622 and 638–658; these read GIAD…DLGI and GKTV…AVAD. Residues aspartate 729 and aspartate 733 each contribute to the Mg(2+) site. 2 helical membrane passes run 742-762 and 800-820; these read VGIA…ITLV and VAAG…IAAA.

This sequence belongs to the cation transport ATPase (P-type) (TC 3.A.3) family. Type IB subfamily.

Its subcellular location is the cell membrane. It carries out the reaction Cu(2+)(in) + ATP + H2O = Cu(2+)(out) + ADP + phosphate + H(+). Involved in copper efflux. The chain is Copper-transporting P-type ATPase (actP) from Rhizobium leguminosarum bv. viciae.